The sequence spans 47 residues: Laccase-2d (47 aa).

The region spanning 2-47 (TGPVADLHIINKDLSPDGFQRPTVVAGGGRDVVSIGRAGDNVTIRF) is the Plastocyanin-like domain.

This sequence belongs to the multicopper oxidase family. In terms of assembly, homodimer. It depends on Cu cation as a cofactor. In terms of processing, N-glycosylated; contains 17% carbohydrates.

The protein resides in the secreted. It catalyses the reaction 4 hydroquinone + O2 = 4 benzosemiquinone + 2 H2O. Its activity is regulated as follows. Inhibited by sodium azide, SDS and mercaptoethanol, but not by 4-hexyl resocinol, L-cysteine and dithiothreitol. Activity is inhibited by the heavy metal ions Cr, W, Sn, Ag(+) and Hg(2+), but not by Pb(2+), Fe(3+), Ni(2+), Li(2+), Co(2+) or Cd(2+). Functionally, lignin degradation and detoxification of lignin-derived products. Has highest activity towards ABTS, also active towards ferulic acid and guaiacol, but is not active towards tyrosine, vanillic acid, 2,5-dimethyl aniline, p-anisidine or violuric acid. This chain is Laccase-2d, found in Cerrena unicolor (Canker rot fungus).